The following is a 456-amino-acid chain: tRNA modification GTPase MnmE (456 aa).

(6S)-5-formyl-5,6,7,8-tetrahydrofolate-binding residues include Arg24, Glu81, and Lys120. Residues Gly216–Gly379 enclose the TrmE-type G domain. Asn226 is a binding site for K(+). GTP contacts are provided by residues Asn226–Ser231, Thr245–Thr251, Asp270–Gly273, Asn335–Asp338, and Ser359–Arg361. Mg(2+) is bound at residue Ser230. Residues Thr245, Ile247, and Thr250 each coordinate K(+). Thr251 serves as a coordination point for Mg(2+). Lys456 is a binding site for (6S)-5-formyl-5,6,7,8-tetrahydrofolate.

Belongs to the TRAFAC class TrmE-Era-EngA-EngB-Septin-like GTPase superfamily. TrmE GTPase family. Homodimer. Heterotetramer of two MnmE and two MnmG subunits. K(+) is required as a cofactor.

The protein localises to the cytoplasm. In terms of biological role, exhibits a very high intrinsic GTPase hydrolysis rate. Involved in the addition of a carboxymethylaminomethyl (cmnm) group at the wobble position (U34) of certain tRNAs, forming tRNA-cmnm(5)s(2)U34. In Pseudomonas entomophila (strain L48), this protein is tRNA modification GTPase MnmE.